The chain runs to 474 residues: Trigger factor (474 aa).

In terms of domain architecture, PPIase FKBP-type spans 171-258; that stretch reads GDVAVIDFQG…LKELKTRDLP (88 aa). The interval 441–474 is disordered; it reads TEVDAASATVETTATETAEEAPEAPKAKKGKKKA. The segment covering 444–456 has biased composition (low complexity); it reads DAASATVETTATE.

It belongs to the FKBP-type PPIase family. Tig subfamily.

The protein localises to the cytoplasm. The enzyme catalyses [protein]-peptidylproline (omega=180) = [protein]-peptidylproline (omega=0). In terms of biological role, involved in protein export. Acts as a chaperone by maintaining the newly synthesized protein in an open conformation. Functions as a peptidyl-prolyl cis-trans isomerase. The sequence is that of Trigger factor from Synechococcus elongatus (strain ATCC 33912 / PCC 7942 / FACHB-805) (Anacystis nidulans R2).